The chain runs to 140 residues: Large ribosomal subunit protein uL15 (140 aa).

Residues 1–31 (MDTKKFRGSRTCGGGTHKNRRGAGNRGGRGK) are disordered.

This sequence belongs to the universal ribosomal protein uL15 family. In terms of assembly, part of the 50S ribosomal subunit.

Functionally, binds to the 23S rRNA. This is Large ribosomal subunit protein uL15 from Methanosarcina barkeri (strain Fusaro / DSM 804).